Reading from the N-terminus, the 2215-residue chain is Unconventional myosin-VIIa (2215 aa).

A Myosin motor domain is found at 65-741 (HGVEDMIRLG…HDMLLEVERD (677 aa)). 158 to 165 (GESGAGKT) serves as a coordination point for ATP. The segment at 632 to 639 (FVRCIKPN) is actin-binding. 5 IQ domains span residues 745-765 (TDRV…SNFL), 768-788 (KSAA…KNYE), 791-811 (RLGF…KQYR), 814-834 (RQRI…KAFR), and 837-857 (LWAV…RLHR). The tract at residues 858–935 (RLRVEYQRRL…LEQMEKARHE (78 aa)) is SAH. A MyTH4 1 domain is found at 1017 to 1253 (YTRRPLKQPL…PSWLELQATK (237 aa)). The 345-residue stretch at 1258–1602 (IMLPVTFMDG…LVVTFLEGLR (345 aa)) folds into the FERM 1 domain. T1563 is subject to Phosphothreonine. A Phosphoserine modification is found at S1569. T1571 carries the phosphothreonine modification. Positions 1603 to 1672 (KRSKYVVALQ…PTDCVYVMPT (70 aa)) constitute an SH3 domain. The MyTH4 2 domain maps to 1747–1896 (HTREPLKQAL…PHLVEVEAIQ (150 aa)). The 304-residue stretch at 1902 to 2205 (IFHKVYFPDD…SYISQMLTAM (304 aa)) folds into the FERM 2 domain.

This sequence belongs to the TRAFAC class myosin-kinesin ATPase superfamily. Myosin family. As to quaternary structure, might homodimerize in a two headed molecule through the formation of a coiled-coil rod. Identified in a complex with USH1C and USH1G. Interacts with MYRIP. Interacts with RPE65. Interacts with CIB2. May interact with CALM. Interacts with WHRN. Interacts with PLEKHB1 (via PH domain). Interacts with PCDH15. Interacts with TWF2. Interacts with USH1G. Interacts with MYH9. Interacts (via MyTH4-FERM domains) with cytoplasmic regions of ADGRV1 and USH2A. Interacts with PDZD7 (via MyTH4-FERM domains). Interacts with CALML4. Detected in mechanosensory stereocilia of cochlea hair cells (at protein level). Expressed in the retina, cochlea, kidney and liver.

Its subcellular location is the cytoplasm. It is found in the cell cortex. The protein localises to the cytoskeleton. It localises to the synapse. In terms of biological role, myosins are actin-based motor molecules with ATPase activity. Unconventional myosins serve in intracellular movements. Their highly divergent tails bind to membranous compartments, which are then moved relative to actin filaments. In the retina, plays an important role in the renewal of the outer photoreceptor disks. Plays an important role in the distribution and migration of retinal pigment epithelial (RPE) melanosomes and phagosomes, and in the regulation of opsin transport in retinal photoreceptors. Mediates intracellular transport of RPE65 in the retina pigment epithelium. In the inner ear, plays an important role in differentiation, morphogenesis and organization of cochlear hair cell bundles. Motor protein that is a part of the functional network formed by USH1C, USH1G, CDH23 and MYO7A that mediates mechanotransduction in cochlear hair cells. Required for normal hearing. Involved in hair-cell vesicle trafficking of aminoglycosides, which are known to induce ototoxicity. This Mus musculus (Mouse) protein is Unconventional myosin-VIIa (Myo7a).